A 118-amino-acid chain; its full sequence is MARAQLVLVALVAAALLLAGPHTTMAAISCGQVNSAVSPCLSYARGGSGPSAACCSGVRSLNSAASTTADRRTACNCLKNVAGSISGLNAGNAASIPSKCGVSIPYTISPSIDCSSVN.

Residues 1–26 form the signal peptide; it reads MARAQLVLVALVAAALLLAGPHTTMA. Cystine bridges form between Cys30-Cys77, Cys40-Cys54, Cys55-Cys100, and Cys75-Cys114.

Belongs to the plant LTP family.

Plant non-specific lipid-transfer proteins transfer phospholipids as well as galactolipids across membranes. May play a role in wax or cutin deposition in the cell walls of expanding epidermal cells and certain secretory tissues. In Oryza sativa subsp. japonica (Rice), this protein is Non-specific lipid-transfer protein 2A (LTP2-A).